The sequence spans 340 residues: Chitinase 7 (340 aa).

The first 32 residues, 1 to 32 (MIAARAANLQVAMKALALAVLALAYAAATARA), serve as a signal peptide directing secretion. The 41-residue stretch at 33–73 (EQCGRQAGGARCPNRLCCSRWGWCGLTDDYCKGGCQSQCRV) folds into the Chitin-binding type-1 domain. 7 cysteine pairs are disulfide-bonded: cysteine 35–cysteine 50, cysteine 44–cysteine 56, cysteine 49–cysteine 63, cysteine 67–cysteine 71, cysteine 118–cysteine 173, cysteine 185–cysteine 193, and cysteine 293–cysteine 323.

This sequence belongs to the glycosyl hydrolase 19 family. Chitinase class I subfamily. Expressed in pistils, stamens and lodicules.

It catalyses the reaction Random endo-hydrolysis of N-acetyl-beta-D-glucosaminide (1-&gt;4)-beta-linkages in chitin and chitodextrins.. Its function is as follows. Hydrolyzes chitin and may play a role in defense against fungal pathogens containing chitin. This Oryza sativa subsp. indica (Rice) protein is Chitinase 7 (Cht7).